The following is a 173-amino-acid chain: Lens fiber membrane intrinsic protein (173 aa).

Residues 1 to 3 (MYS) lie on the Cytoplasmic side of the membrane. The helical transmembrane segment at 4-24 (FMGGGLFCAWVGTILLVVATA) threads the bilayer. Over 25 to 66 (TDHWMQYRLSGSFAHQGLWRYCLGNKCFLQTESIAYWNATRA) the chain is Extracellular. Residues tryptophan 43 and tryptophan 61 are each glycosylated (C-linked (Man) tryptophan). An N-linked (GlcNAc...) asparagine glycan is attached at asparagine 62. The chain crosses the membrane as a helical span at residues 67–87 (FMILSALCATSGIIMGVLAFA). Residues 88 to 98 (QQSTFTRLSRP) lie on the Cytoplasmic side of the membrane. The chain crosses the membrane as a helical span at residues 99–119 (FSAGIMFFASTLFVLLALAIY). Residues 120-140 (TGVTVSFLGRRFGDWRFSWSY) are Extracellular-facing. Residues 141–161 (ILGWVALLMTFFAGIFYMCAY) form a helical membrane-spanning segment. The Cytoplasmic portion of the chain corresponds to 162-173 (RMHECRRLSTPR). Serine 170 is modified (phosphoserine). Position 171 is a phosphothreonine (threonine 171).

This sequence belongs to the PMP-22/EMP/MP20 family. Seems to be associated with itself or another lens membrane component via disulfide bonds. Eye lens specific.

Its subcellular location is the membrane. In terms of biological role, present in the thicker 16-17 nm junctions of mammalian lens fiber cells, where it may contribute to cell junctional organization. Acts as a receptor for calmodulin. May play an important role in both lens development and cataractogenesis. The sequence is that of Lens fiber membrane intrinsic protein (Lim2) from Rattus norvegicus (Rat).